Consider the following 236-residue polypeptide: Purine nucleoside phosphorylase DeoD-type (236 aa).

His5 is a binding site for a purine D-ribonucleoside. Residues Gly21, Arg25, Arg44, and 88–91 (RVGT) each bind phosphate. Residues 180–182 (DME) and 204–205 (SD) contribute to the a purine D-ribonucleoside site. The Proton donor role is filled by Asp205.

This sequence belongs to the PNP/UDP phosphorylase family. As to quaternary structure, homohexamer; trimer of homodimers.

It carries out the reaction a purine D-ribonucleoside + phosphate = a purine nucleobase + alpha-D-ribose 1-phosphate. The enzyme catalyses a purine 2'-deoxy-D-ribonucleoside + phosphate = a purine nucleobase + 2-deoxy-alpha-D-ribose 1-phosphate. Functionally, catalyzes the reversible phosphorolytic breakdown of the N-glycosidic bond in the beta-(deoxy)ribonucleoside molecules, with the formation of the corresponding free purine bases and pentose-1-phosphate. This chain is Purine nucleoside phosphorylase DeoD-type, found in Buchnera aphidicola subsp. Schizaphis graminum (strain Sg).